Consider the following 365-residue polypeptide: Phosphate acyltransferase (365 aa).

This sequence belongs to the PlsX family. Homodimer. Probably interacts with PlsY.

It is found in the cytoplasm. The enzyme catalyses a fatty acyl-[ACP] + phosphate = an acyl phosphate + holo-[ACP]. It participates in lipid metabolism; phospholipid metabolism. Its function is as follows. Catalyzes the reversible formation of acyl-phosphate (acyl-PO(4)) from acyl-[acyl-carrier-protein] (acyl-ACP). This enzyme utilizes acyl-ACP as fatty acyl donor, but not acyl-CoA. The polypeptide is Phosphate acyltransferase (Klebsiella pneumoniae subsp. pneumoniae (strain ATCC 700721 / MGH 78578)).